The sequence spans 199 residues: Outer-membrane lipoprotein LolB (199 aa).

The signal sequence occupies residues 1–28 (MSACPAPRSPVRWLHAFTLFLLLAVLAG). The N-palmitoyl cysteine moiety is linked to residue cysteine 29. A lipid anchor (S-diacylglycerol cysteine) is attached at cysteine 29.

Belongs to the LolB family. In terms of assembly, monomer.

Its subcellular location is the cell outer membrane. Its function is as follows. Plays a critical role in the incorporation of lipoproteins in the outer membrane after they are released by the LolA protein. In Bordetella pertussis (strain Tohama I / ATCC BAA-589 / NCTC 13251), this protein is Outer-membrane lipoprotein LolB.